The following is a 578-amino-acid chain: Serine/threonine-protein kinase D6PKL3 (578 aa).

A compositionally biased stretch (low complexity) spans Met1–Lys24. Residues Met1 to Val64 are disordered. Polar residues predominate over residues Gly25–Ser34. Positions Ser53–Val64 are enriched in low complexity. The Protein kinase domain maps to Phe182 to Phe516. ATP is bound by residues Leu188 to Val196 and Lys211. Asp307 serves as the catalytic Proton acceptor. Positions Asp325–Glu426 are activation loop. The PIF signature appears at Ile575–Phe578.

This sequence belongs to the protein kinase superfamily. AGC Ser/Thr protein kinase family. In terms of tissue distribution, expressed predominantly in root tissue with lower levels found in leaf, stem, seed and flower.

Its subcellular location is the cell membrane. The catalysed reaction is L-seryl-[protein] + ATP = O-phospho-L-seryl-[protein] + ADP + H(+). It carries out the reaction L-threonyl-[protein] + ATP = O-phospho-L-threonyl-[protein] + ADP + H(+). Protein kinase that regulates the auxin transport activity of PIN auxin efflux facilitators by direct phosphorylation. D6PK-mediated PIN phosphorylation promotes auxin transport in the hypocotyl and this is a prerequisite for PHOT1-dependent hypocotyl bending. This is Serine/threonine-protein kinase D6PKL3 (D6PKL3) from Arabidopsis thaliana (Mouse-ear cress).